Reading from the N-terminus, the 606-residue chain is Thrombospondin-related anonymous protein (606 aa).

The first 24 residues, 1–24, serve as a signal peptide directing secretion; the sequence is MKLLGNSKYFFVVLLLCISVFLNG. The VWFA domain maps to 43–228; sequence DLHILLDGSG…TMIKPFLSKV (186 aa). The 47-residue stretch at 235–281 folds into the TSP type-1 domain; it reads VALCGKWEEWSECSTTCDNGTKIRKRKVLHPNCAGEMTAPCKVRDCP. Residues 301-541 form a disordered region; that stretch reads PVEPIEPAEP…SKKQSKSNNG (241 aa). 3 stretches are compositionally biased toward low complexity: residues 409 to 425, 440 to 450, and 459 to 479; these read ENPF…IIAP, ELPNNLPESPS, and PNDN…IPNK. Basic and acidic residues-rich tracts occupy residues 487 to 504 and 516 to 532; these read NPYK…RSND and DKLE…ENKS. A helical membrane pass occupies residues 544–564; that stretch reads IAGGIIGGLAIIGCIGVGYNF.

In terms of assembly, interacts (via integrin-like A-domain) with Anopheles gambiae saglin/SG1F; the interaction probably promotes sporozoite invasion of salivary gland. Interacts (via integrin-like A-domain) with human AHSG; the interaction promotes sporozoite invasion of hepatocytes and formation of exoerythrocytic forms of parasites in human hepatoma HepG2 cells.

The protein resides in the cell membrane. It localises to the cytoplasm. In terms of biological role, promotes parasite ability to invade host hepatocytes. Promotes parasite ability to invade mosquito salivary glands. Required for sporozoite gliding motility. This chain is Thrombospondin-related anonymous protein, found in Plasmodium berghei (strain Anka).